Here is a 634-residue protein sequence, read N- to C-terminus: Chaperone protein DnaK (634 aa).

The residue at position 199 (T199) is a Phosphothreonine; by autocatalysis. Low complexity predominate over residues 601–618; it reads AAAGQAQAESGAGAQGNA. The disordered stretch occupies residues 601-634; that stretch reads AAAGQAQAESGAGAQGNAKPDDVVDAEFEEVDKK. Acidic residues predominate over residues 623-634; the sequence is VVDAEFEEVDKK.

This sequence belongs to the heat shock protein 70 family.

In terms of biological role, acts as a chaperone. This Acidithiobacillus ferrooxidans (strain ATCC 23270 / DSM 14882 / CIP 104768 / NCIMB 8455) (Ferrobacillus ferrooxidans (strain ATCC 23270)) protein is Chaperone protein DnaK.